The chain runs to 161 residues: Ribosome maturation factor RimP (161 aa).

Belongs to the RimP family.

It localises to the cytoplasm. Required for maturation of 30S ribosomal subunits. This Rickettsia felis (strain ATCC VR-1525 / URRWXCal2) (Rickettsia azadi) protein is Ribosome maturation factor RimP.